The chain runs to 161 residues: Phosphopantetheine adenylyltransferase (161 aa).

It belongs to the eukaryotic CoaD family.

The protein localises to the cytoplasm. The enzyme catalyses (R)-4'-phosphopantetheine + ATP + H(+) = 3'-dephospho-CoA + diphosphate. It functions in the pathway cofactor biosynthesis; coenzyme A biosynthesis. Reversibly transfers an adenylyl group from ATP to 4'-phosphopantetheine, yielding dephospho-CoA (dPCoA) and pyrophosphate. The sequence is that of Phosphopantetheine adenylyltransferase from Methanosarcina barkeri (strain Fusaro / DSM 804).